The following is a 98-amino-acid chain: Feather keratin 1 (98 aa).

This sequence belongs to the avian keratin family. In terms of assembly, the avian keratins (F-ker, S-ker, C-ker and B-ker) are a complex mixture of very similar polypeptides.

The protein is Feather keratin 1 of Gallus gallus (Chicken).